A 388-amino-acid chain; its full sequence is Homoserine O-acetyltransferase (388 aa).

The AB hydrolase-1 domain occupies 55-354; it reads PIVLIEHALT…PTGHDGFLIE (300 aa). Residue serine 150 is the Nucleophile of the active site. Arginine 220 is a substrate binding site. Catalysis depends on residues aspartate 318 and histidine 348. Aspartate 349 is a binding site for substrate.

The protein belongs to the AB hydrolase superfamily. MetX family. Homodimer.

Its subcellular location is the cytoplasm. The catalysed reaction is L-homoserine + acetyl-CoA = O-acetyl-L-homoserine + CoA. Its pathway is amino-acid biosynthesis; L-methionine biosynthesis via de novo pathway; O-acetyl-L-homoserine from L-homoserine: step 1/1. Functionally, transfers an acetyl group from acetyl-CoA to L-homoserine, forming acetyl-L-homoserine. In Corynebacterium urealyticum (strain ATCC 43042 / DSM 7109), this protein is Homoserine O-acetyltransferase.